A 183-amino-acid polypeptide reads, in one-letter code: Archaemetzincin (183 aa).

His-131 contacts Zn(2+). Glu-132 (proton acceptor) is an active-site residue. Zn(2+)-binding residues include His-135, His-141, Cys-142, Cys-147, Cys-166, and Cys-169.

Belongs to the peptidase M54 family. Monomer. Zn(2+) is required as a cofactor.

Its function is as follows. Probable zinc metalloprotease whose natural substrate is unknown. The sequence is that of Archaemetzincin from Saccharolobus islandicus (strain Y.N.15.51 / Yellowstone #2) (Sulfolobus islandicus).